The following is a 498-amino-acid chain: Flagellin (498 aa).

This sequence belongs to the bacterial flagellin family.

Its subcellular location is the secreted. It is found in the bacterial flagellum. Its function is as follows. Flagellin is the subunit protein which polymerizes to form the filaments of bacterial flagella. This Escherichia coli (strain K12) protein is Flagellin (fliC).